Here is a 185-residue protein sequence, read N- to C-terminus: uncharacterized protein (185 aa).

As to expression, component of the acid-insoluble and acid-soluble organic matrix of calcified layers of the shell (at protein level).

It localises to the secreted. This is an uncharacterized protein from Lottia gigantea (Giant owl limpet).